The primary structure comprises 519 residues: Amphoterin-induced protein 2 (519 aa).

The N-terminal stretch at 1-38 is a signal peptide; it reads MSLRFHTLPTLPRAVKPGCRELLCLLVIAVMVSPSASG. An LRRNT domain is found at 39–67; sequence MCPTACICATDIVSCTNKNLSKVPGNLFR. Residues 39-397 lie on the Extracellular side of the membrane; that stretch reads MCPTACICAT…RSHAHEAFNT (359 aa). Cystine bridges form between Cys-40–Cys-46 and Cys-44–Cys-53. Residue Asn-57 is glycosylated (N-linked (GlcNAc...) asparagine). LRR repeat units follow at residues 68 to 89, 93 to 114, 117 to 138, 141 to 162, 165 to 186, and 192 to 213; these read LIKR…WIPV, KLST…SFST, NLKC…TFQE, ALEV…AFGG, HLQK…LYTG, and DLTF…HINL. N-linked (GlcNAc...) asparagine glycosylation occurs at Asn-103. The 57-residue stretch at 227-283 folds into the LRRCT domain; sequence NPFVCDCSLYSLLIFWYRRHFSSVMDFKNDYTCRLWSDSRHSHQLQLLQESFLNCSY. Disulfide bonds link Cys-231–Cys-259 and Cys-233–Cys-281. 7 N-linked (GlcNAc...) asparagine glycosylation sites follow: Asn-280, Asn-287, Asn-344, Asn-372, Asn-380, Asn-383, and Asn-387. Positions 288-378 constitute an Ig-like C2-type domain; that stretch reads GSFHALGFIH…RLLNETVDIM (91 aa). The cysteines at positions 309 and 362 are disulfide-linked. Residues 398–418 traverse the membrane as a helical segment; sequence AFTTLAACVASIVLVLLYLYL. Over 419–519 the chain is Cytoplasmic; the sequence is TPCPCKCKAK…FSDTPFVAST (101 aa). Positions 498–519 are disordered; sequence RAKSDSDSVNSVFSDTPFVAST.

The protein belongs to the immunoglobulin superfamily. AMIGO family. In terms of assembly, binds itself as well as AMIGO1 and AMIGO3. As to expression, highest level in cerebellum, retina, liver, and lung. Lower levels in cerebrum, kidney, small intestine, spleen and testis.

Its subcellular location is the cell membrane. The protein resides in the nucleus. Required for depolarization-dependent survival of cultured cerebellar granule neurons. May mediate homophilic as well as heterophilic cell-cell interaction with AMIGO1 or AMIGO3. May contribute to signal transduction through its intracellular domain. This is Amphoterin-induced protein 2 from Mus musculus (Mouse).